Here is a 280-residue protein sequence, read N- to C-terminus: 3-methyl-2-oxobutanoate hydroxymethyltransferase (280 aa).

Asp45 and Asp84 together coordinate Mg(2+). Residues 45-46 (DS), Asp84, and Lys114 each bind 3-methyl-2-oxobutanoate. Residue Glu116 coordinates Mg(2+). The Proton acceptor role is filled by Glu183.

It belongs to the PanB family. In terms of assembly, homodecamer; pentamer of dimers. Mg(2+) serves as cofactor.

Its subcellular location is the cytoplasm. The catalysed reaction is 3-methyl-2-oxobutanoate + (6R)-5,10-methylene-5,6,7,8-tetrahydrofolate + H2O = 2-dehydropantoate + (6S)-5,6,7,8-tetrahydrofolate. Its pathway is cofactor biosynthesis; (R)-pantothenate biosynthesis; (R)-pantoate from 3-methyl-2-oxobutanoate: step 1/2. Catalyzes the reversible reaction in which hydroxymethyl group from 5,10-methylenetetrahydrofolate is transferred onto alpha-ketoisovalerate to form ketopantoate. This chain is 3-methyl-2-oxobutanoate hydroxymethyltransferase, found in Clostridium kluyveri (strain ATCC 8527 / DSM 555 / NBRC 12016 / NCIMB 10680 / K1).